The sequence spans 168 residues: 6,7-dimethyl-8-ribityllumazine synthase (168 aa).

5-amino-6-(D-ribitylamino)uracil is bound by residues phenylalanine 24, 58-60, and 82-84; these read ALE and AVI. Position 87-88 (87-88) interacts with (2S)-2-hydroxy-3-oxobutyl phosphate; the sequence is ET. Catalysis depends on histidine 90, which acts as the Proton donor. 5-amino-6-(D-ribitylamino)uracil is bound at residue asparagine 115. Arginine 129 contacts (2S)-2-hydroxy-3-oxobutyl phosphate.

This sequence belongs to the DMRL synthase family.

The catalysed reaction is (2S)-2-hydroxy-3-oxobutyl phosphate + 5-amino-6-(D-ribitylamino)uracil = 6,7-dimethyl-8-(1-D-ribityl)lumazine + phosphate + 2 H2O + H(+). The protein operates within cofactor biosynthesis; riboflavin biosynthesis; riboflavin from 2-hydroxy-3-oxobutyl phosphate and 5-amino-6-(D-ribitylamino)uracil: step 1/2. Catalyzes the formation of 6,7-dimethyl-8-ribityllumazine by condensation of 5-amino-6-(D-ribitylamino)uracil with 3,4-dihydroxy-2-butanone 4-phosphate. This is the penultimate step in the biosynthesis of riboflavin. This is 6,7-dimethyl-8-ribityllumazine synthase from Paraburkholderia xenovorans (strain LB400).